Here is a 131-residue protein sequence, read N- to C-terminus: Profilin-1 (131 aa).

This sequence belongs to the profilin family. Occurs in many kinds of cells as a complex with monomeric actin in a 1:1 ratio. In terms of tissue distribution, cytoplasmic distribution in hypocotyls. In root nodules, it is found in all cells, but is more abundant in the vascular tissue as well as the endodermis.

The protein localises to the cytoplasm. Its subcellular location is the cytoskeleton. Its function is as follows. Binds to actin and affects the structure of the cytoskeleton. At high concentrations, profilin prevents the polymerization of actin, whereas it enhances it at low concentrations. By binding to PIP2, it inhibits the formation of IP3 and DG. This Phaseolus vulgaris (Kidney bean) protein is Profilin-1.